The chain runs to 108 residues: uncharacterized protein (108 aa).

The N-terminal stretch at 1–20 (MNLKSIIFVLFIAFFAFSLA) is a signal peptide. A glycan (N-linked (GlcNAc...) asparagine) is linked at asparagine 39.

It belongs to the Dictyostelium gerABC family.

Its subcellular location is the secreted. This is an uncharacterized protein from Dictyostelium discoideum (Social amoeba).